Here is a 463-residue protein sequence, read N- to C-terminus: FAD-dependent monooxygenase nodM (463 aa).

Residues 5 to 25 (EFKVIIVGGSLAGLTLAHCLL) traverse the membrane as a helical segment. FAD is bound by residues E35, G49, R108, D305, and A318. A helical transmembrane segment spans residues 438 to 458 (ILLGFTGVFTSALAMVVLLHI).

The protein belongs to the paxM FAD-dependent monooxygenase family. FAD serves as cofactor.

The protein localises to the membrane. It functions in the pathway secondary metabolite biosynthesis. In terms of biological role, FAD-dependent monooxygenase; part of the gene cluster that mediates the biosynthesis of the indole diterpenes nodulisporic acids (NA). Nodulisporic acid A (NAA) and its chemically modified derivatives are of particular significance because of their highly potent insecticidal activity against blood-feeding arthropods and lack of observable adverse effects on mammals, in particular the tremogenicity associated with the paspaline-derived IDTs is not observed. The geranylgeranyl diphosphate (GGPP) synthase ggs1, localized outside of the cluster, is proposed to catalyze the first step in nodulisporic acid biosynthesis via conversion of farnesyl pyrophosphate and isopentyl pyrophosphate into geranylgeranyl pyrophosphate (GGPP). Condensation of indole-3-glycerol phosphate with GGPP by the prenyl transferase nodC then forms 3-geranylgeranylindole (3-GGI). Epoxidation by the FAD-dependent monooxygenase nodM leads to a single-epoxidized-GGI that is substrate of the terpene cyclase nodB for cyclization to yield emindole SB. The terminal methyl carbon, C28, of emindole SB is then oxidized by the cytochrome P450 monooxygenase nodW to produce nodulisporic acid F (NAF), the pentacyclic core of NAA. NAF is converted to nodulisporic acid E (NAE) via prenylation. This step is probably performed by one of the indole diterpene prenyltransferases nodD1 or nodD2. Several oxidation steps performed by the FAD-linked oxidoreductase nodO and one of the cytochrome P450 monooxygenase nodR, nodX or nodZ further convert NAE to nodulisporic acid D (NAD). NAD is substrate of cytochrome P450 monooxygenase nodJ to produce the precursor of nodulisporic acid C (NAC), converted to NAC by one of the indole diterpene prenyltransferases nodD1 or nodD2. The FAD-dependent monooxygenase nodY2 then oxidizes NAC to nodulisporic acid B (NAB). Finally NAB is converted to NAA by one of the cytochrome P450 monooxygenases nodR, nodX or nodZ. In Hypoxylon pulicicidum, this protein is FAD-dependent monooxygenase nodM.